The chain runs to 388 residues: tRNA(Ile)-lysidine synthase (388 aa).

51–56 (SGGRDS) contacts ATP.

The protein belongs to the tRNA(Ile)-lysidine synthase family.

The protein localises to the cytoplasm. It carries out the reaction cytidine(34) in tRNA(Ile2) + L-lysine + ATP = lysidine(34) in tRNA(Ile2) + AMP + diphosphate + H(+). Its function is as follows. Ligates lysine onto the cytidine present at position 34 of the AUA codon-specific tRNA(Ile) that contains the anticodon CAU, in an ATP-dependent manner. Cytidine is converted to lysidine, thus changing the amino acid specificity of the tRNA from methionine to isoleucine. This Bifidobacterium longum (strain DJO10A) protein is tRNA(Ile)-lysidine synthase.